We begin with the raw amino-acid sequence, 94 residues long: PTS system galactitol-specific EIIB component (94 aa).

One can recognise a PTS EIIB type-2 domain in the interval 1 to 94 (MKRKIIVACG…QNKILTILQG (94 aa)). The Phosphocysteine intermediate; for EIIB activity role is filled by C9. C9 carries the post-translational modification Phosphocysteine; by EIIA.

In terms of assembly, forms a complex with one each of subunit of GatA, GatB and 2 subunits of GatC.

Its subcellular location is the cytoplasm. It catalyses the reaction galactitol(out) + N(pros)-phospho-L-histidyl-[protein] = galactitol 1-phosphate(in) + L-histidyl-[protein]. Functionally, the phosphoenolpyruvate-dependent sugar phosphotransferase system (PTS), a major carbohydrate active transport system, catalyzes the phosphorylation of incoming sugar substrates concomitant with their translocation across the cell membrane. The enzyme II complex composed of GatA, GatB and GatC is involved in galactitol transport. It can also use D-glucitol. This chain is PTS system galactitol-specific EIIB component, found in Escherichia coli (strain K12).